A 306-amino-acid polypeptide reads, in one-letter code: tRNA dimethylallyltransferase 2 (306 aa).

Position 11–18 (11–18) interacts with ATP; the sequence is GPTASGKT. 13–18 lines the substrate pocket; it reads TASGKT. The segment at 36 to 39 is interaction with substrate tRNA; it reads DSRQ.

It belongs to the IPP transferase family. In terms of assembly, monomer. Requires Mg(2+) as cofactor.

The enzyme catalyses adenosine(37) in tRNA + dimethylallyl diphosphate = N(6)-dimethylallyladenosine(37) in tRNA + diphosphate. Functionally, catalyzes the transfer of a dimethylallyl group onto the adenine at position 37 in tRNAs that read codons beginning with uridine, leading to the formation of N6-(dimethylallyl)adenosine (i(6)A). In Bacteroides thetaiotaomicron (strain ATCC 29148 / DSM 2079 / JCM 5827 / CCUG 10774 / NCTC 10582 / VPI-5482 / E50), this protein is tRNA dimethylallyltransferase 2.